A 311-amino-acid polypeptide reads, in one-letter code: Heme A synthase (311 aa).

Residues 1 to 6 (MQRFIK) are Cytoplasmic-facing. The chain crosses the membrane as a helical span at residues 7 to 27 (WLAVITSLDLLIVLLGGALVT). The Extracellular portion of the chain corresponds to 28-62 (KTGSGQGCGKSWPLCNGEFVPSNLSMETIIELSHR). Residues Cys35 and Cys42 are joined by a disulfide bond. The active site involves Glu58. Heme o is bound at residue His61. A helical membrane pass occupies residues 63–83 (LTSGSAGILVTLLCILSWKYY). At 84 to 91 (KHVRETKT) the chain is on the cytoplasmic side. A helical membrane pass occupies residues 92–112 (LAILSFVFLVAQALMGAAAVV). The Extracellular segment spans residues 113-121 (WGQMPAVLA). Residues 122–142 (IHFGISLISFASVILLTCLIF) form a helical membrane-spanning segment. Residue His123 coordinates heme o. The Cytoplasmic portion of the chain corresponds to 143–159 (EIDQKFDARSLIMDKKM). The chain crosses the membrane as a helical span at residues 160-180 (KFHIYGVTIYCYLVVYTGALV). Over 181 to 211 (RHERASLACPDFPLCSKNRPMPTQLHEWVQM) the chain is Extracellular. An intrachain disulfide couples Cys189 to Cys195. The chain crosses the membrane as a helical span at residues 212 to 232 (GHRLAAMLIFVWILYAMILAI). His213 provides a ligand contact to heme b. Over 233 to 243 (RHYKQQPVVYW) the chain is Cytoplasmic. Residues 244 to 264 (GWIISFILVTLQAIVGILVVF) traverse the membrane as a helical segment. Topologically, residues 265 to 271 (TNASLAM) are extracellular. Residues 272-292 (ALLHSLFISCLFAVLCYLVML) traverse the membrane as a helical segment. His275 is a heme b binding site. At 293 to 311 (GTRSKVNAKEAASTSKQTK) the chain is on the cytoplasmic side.

The protein belongs to the COX15/CtaA family. Type 1 subfamily. As to quaternary structure, interacts with CtaB. Requires heme b as cofactor.

The protein localises to the cell membrane. It carries out the reaction Fe(II)-heme o + 2 A + H2O = Fe(II)-heme a + 2 AH2. It functions in the pathway porphyrin-containing compound metabolism; heme A biosynthesis; heme A from heme O: step 1/1. Catalyzes the conversion of heme O to heme A by two successive hydroxylations of the methyl group at C8. The first hydroxylation forms heme I, the second hydroxylation results in an unstable dihydroxymethyl group, which spontaneously dehydrates, resulting in the formyl group of heme A. This chain is Heme A synthase, found in Bacillus cereus (strain 03BB102).